Here is a 202-residue protein sequence, read N- to C-terminus: Zinc metalloproteinase barnettlysin-1 (202 aa).

The Peptidase M12B domain occupies 6–200 (RYVELFIVVD…MKENPQCILN (195 aa)). E9 and D93 together coordinate Ca(2+). Disulfide bonds link C117–C197, C157–C181, and C159–C164. H142 contacts Zn(2+). E143 is an active-site residue. Positions 146 and 152 each coordinate Zn(2+). C197 and N200 together coordinate Ca(2+).

Monomer. Zn(2+) serves as cofactor. As to expression, expressed by the venom gland.

Its subcellular location is the secreted. In terms of biological role, non-hemorrhagic metalloproteinase that hydrolyzes the alpha chains of fibrinogen and fibrin but has no activity on beta- and gamma-chains. Cleaves X-Leu bonds. Inhibits platelet aggregation induced by the von Willebrand factor (VWF) (IC(50) is 1.4 uM) and type I collagen (IC(50) is 3.2 uM). Acts by cleaving the vWF and its receptor GPIb, and by cleaving the collagen-binding Alpha-2A domain of the collagen receptor alpha-2/beta-1 integrin (ITGA2/ITGB1). Also degrades the extracellular matrix protein fibronectin (FN1), but has no effect on laminin and type I collagen. The polypeptide is Zinc metalloproteinase barnettlysin-1 (Bothrops barnetti (Barnett's lancehead)).